The sequence spans 207 residues: Ras-related protein Rab-8A (207 aa).

Positions 17, 18, 19, 20, 21, 22, 23, 35, 39, and 40 each coordinate GTP. Threonine 22 provides a ligand contact to Mg(2+). Short sequence motifs (switch) lie at residues 31–45 (DAFNSTFISTIGIDF) and 63–80 (DTAGQERFRTITTAYYRG). Residues threonine 40 and aspartate 63 each contribute to the Mg(2+) site. Glycine 66 is a GTP binding site. Threonine 72 carries the phosphothreonine modification. The GTP site is built by asparagine 121, lysine 122, aspartate 124, alanine 152, and lysine 153. Residues serine 181 and serine 185 each carry the phosphoserine modification. Cysteine 204 carries the cysteine methyl ester modification. Cysteine 204 carries the S-geranylgeranyl cysteine lipid modification. A propeptide spans 205-207 (VLL) (removed in mature form).

This sequence belongs to the small GTPase superfamily. Rab family. As to quaternary structure, interacts (GTP-bound form) with MICALL1; regulates RAB8A association with recycling endosomes. Interacts with MICALL2; competes with RAB13 and is involved in E-cadherin endocytic recycling. Interacts (GTP-bound form) with MICAL1, MICALCL, MICAL3, EHBP1 and EHBP1L1; at least in case of MICAL1, MICALCL, MICAL3 and EHBP1L1 two molecules of RAB8A can bind to one molecule of the effector protein; ternary complexes of RAB8A, RAB13 and either MICAL1 or EHBP1L1 are possible. Interacts with EHD1. Interacts with MAP4K2 and SYTL4. Interacts with SGSM1 and SGSM3. Interacts with RABIF, RIMS2, RPH3A and RPH3A. Interacts with OPTN. Interacts with RAB3IP, RAB3IP functions as guanine exchange factor (GEF). Interacts with MYO5B. Interacts with CIMAP3. Interacts with BIRC6/bruce. Interacts with OCRL. Interacts with AHI1. Interacts with DCDC1. Interacts with LRRK2; interaction facilitates phosphorylation of Thr-72. Interacts with RAB31P, GDI1, GDI2, CHM, CHML, RABGGTA, RABGGTB, TBC1D15 and INPP5B; these interactions are dependent on Thr-72 not being phosphorylated. Interacts with RILPL1 and RILPL2; these interactions are dependent on the phosphorylation of Thr-72 by LRRK2. Interacts with DZIP1; prevents inhibition by the GDP-dissociation inhibitor GDI2. Interacts (in GDP-bound form) with RAB3IP/Rabin8, RAB3IP functions as guanine exchange factor (GEF) towards RAB8A. Interacts (in GDP-bound form) with RPGR, RPGR functions as GEF towards RAB8A. Mg(2+) is required as a cofactor. Post-translationally, phosphorylation of Thr-72 in the switch II region by LRRK2 prevents the association of RAB regulatory proteins, including CHM, CHML and RAB GDP dissociation inhibitors GDI1 and GDI2. Phosphorylation by LRRK2 is required for localization to stressed lysosomes.

The protein localises to the cell membrane. The protein resides in the golgi apparatus. It is found in the endosome membrane. It localises to the recycling endosome membrane. Its subcellular location is the cell projection. The protein localises to the cilium. The protein resides in the cytoplasmic vesicle. It is found in the phagosome membrane. It localises to the cytoplasm. Its subcellular location is the cytoskeleton. The protein localises to the microtubule organizing center. The protein resides in the centrosome. It is found in the centriole. It localises to the cilium basal body. Its subcellular location is the midbody. The protein localises to the lysosome. The enzyme catalyses GTP + H2O = GDP + phosphate + H(+). Its activity is regulated as follows. Regulated by guanine nucleotide exchange factors (GEFs) such as RAB3IP/Rabin8 and RPGR which promote the exchange of bound GDP for free GTP, GTPase activating proteins (GAPs) which increase the GTP hydrolysis activity, and GDP dissociation inhibitors (GDIs) which inhibit the dissociation of the nucleotide from the GTPase. Activated in response to insulin. Functionally, the small GTPases Rab are key regulators of intracellular membrane trafficking, from the formation of transport vesicles to their fusion with membranes. Rabs cycle between an inactive GDP-bound form and an active GTP-bound form that is able to recruit to membranes different sets of downstream effectors directly responsible for vesicle formation, movement, tethering and fusion. RAB8A is involved in polarized vesicular trafficking and neurotransmitter release. Together with RAB11A, RAB3IP, the exocyst complex, PARD3, PRKCI, ANXA2, CDC42 and DNMBP promotes transcytosis of PODXL to the apical membrane initiation sites (AMIS), apical surface formation and lumenogenesis. Regulates the compacted morphology of the Golgi. Together with MYO5B and RAB11A participates in epithelial cell polarization. Also involved in membrane trafficking to the cilium and ciliogenesis. Together with MICALL2, may also regulate adherens junction assembly. May play a role in insulin-induced transport to the plasma membrane of the glucose transporter GLUT4 and therefore play a role in glucose homeostasis. Involved in autophagy. Participates in the export of a subset of neosynthesized proteins through a Rab8-Rab10-Rab11-dependent endososomal export route. Targeted to and stabilized on stressed lysosomes through LRRK2 phosphorylation. Suppresses stress-induced lysosomal enlargement through EHBP1 and EHNP1L1 effector proteins. The polypeptide is Ras-related protein Rab-8A (RAB8A) (Pongo abelii (Sumatran orangutan)).